We begin with the raw amino-acid sequence, 430 residues long: GTPase Obg (430 aa).

The Obg domain occupies 1 to 158 (MFVDQVTISL…LDVTLELKLL (158 aa)). The interval 118–145 (RGGRGGRGNSRFATPRNPAPDFSENGEP) is disordered. The OBG-type G domain occupies 159–329 (ADVGLVGFPS…LLYAIADKLD (171 aa)). Residues 165–172 (GFPSVGKS), 190–194 (FTTIK), 212–215 (DLPG), 282–285 (NKMD), and 310–312 (STI) each bind GTP. Positions 172 and 192 each coordinate Mg(2+). Residues 352 to 430 (KHTPSQDKFT…ILGGEFEFVE (79 aa)) form the OCT domain.

This sequence belongs to the TRAFAC class OBG-HflX-like GTPase superfamily. OBG GTPase family. As to quaternary structure, monomer. The cofactor is Mg(2+).

The protein localises to the cytoplasm. An essential GTPase which binds GTP, GDP and possibly (p)ppGpp with moderate affinity, with high nucleotide exchange rates and a fairly low GTP hydrolysis rate. Plays a role in control of the cell cycle, stress response, ribosome biogenesis and in those bacteria that undergo differentiation, in morphogenesis control. In Staphylococcus haemolyticus (strain JCSC1435), this protein is GTPase Obg.